Consider the following 565-residue polypeptide: NAD-dependent malic enzyme (565 aa).

Y104 (proton donor) is an active-site residue. R157 is a binding site for NAD(+). K175 functions as the Proton acceptor in the catalytic mechanism. 3 residues coordinate a divalent metal cation: E246, D247, and D270. NAD(+) is bound by residues D270 and N418.

This sequence belongs to the malic enzymes family. In terms of assembly, homotetramer. Mg(2+) is required as a cofactor. Mn(2+) serves as cofactor.

It catalyses the reaction (S)-malate + NAD(+) = pyruvate + CO2 + NADH. The enzyme catalyses oxaloacetate + H(+) = pyruvate + CO2. This chain is NAD-dependent malic enzyme, found in Salmonella choleraesuis (strain SC-B67).